The chain runs to 508 residues: Photosystem II CP47 reaction center protein (508 aa).

6 consecutive transmembrane segments (helical) span residues 21–36 (SVHI…WAGS), 101–115 (IVFS…IWHW), 140–156 (GIHL…FGAF), 203–218 (IAAG…FHLS), 237–252 (VLSS…AFVV), and 457–472 (SFAL…HGAR).

Belongs to the PsbB/PsbC family. PsbB subfamily. As to quaternary structure, PSII is composed of 1 copy each of membrane proteins PsbA, PsbB, PsbC, PsbD, PsbE, PsbF, PsbH, PsbI, PsbJ, PsbK, PsbL, PsbM, PsbT, PsbX, PsbY, PsbZ, Psb30/Ycf12, at least 3 peripheral proteins of the oxygen-evolving complex and a large number of cofactors. It forms dimeric complexes. Requires Binds multiple chlorophylls. PSII binds additional chlorophylls, carotenoids and specific lipids. as cofactor.

It is found in the plastid. The protein localises to the chloroplast thylakoid membrane. Its function is as follows. One of the components of the core complex of photosystem II (PSII). It binds chlorophyll and helps catalyze the primary light-induced photochemical processes of PSII. PSII is a light-driven water:plastoquinone oxidoreductase, using light energy to abstract electrons from H(2)O, generating O(2) and a proton gradient subsequently used for ATP formation. This Barbarea verna (Land cress) protein is Photosystem II CP47 reaction center protein.